The chain runs to 177 residues: Large ribosomal subunit protein uL6 (177 aa).

Belongs to the universal ribosomal protein uL6 family. In terms of assembly, part of the 50S ribosomal subunit.

This protein binds to the 23S rRNA, and is important in its secondary structure. It is located near the subunit interface in the base of the L7/L12 stalk, and near the tRNA binding site of the peptidyltransferase center. This chain is Large ribosomal subunit protein uL6, found in Verminephrobacter eiseniae (strain EF01-2).